The chain runs to 255 residues: 3-oxoacyl-[acyl-carrier-protein] reductase MabA (255 aa).

Residues 33–35 (RGI), Arg55, 69–70 (DV), Gly98, Tyr161, Lys165, Ile194, and Arg205 contribute to the NADP(+) site. Tyr161 functions as the Proton acceptor in the catalytic mechanism.

It belongs to the short-chain dehydrogenases/reductases (SDR) family. Homotetramer.

The protein localises to the secreted. It is found in the cell wall. The enzyme catalyses a (3R)-hydroxyacyl-[ACP] + NADP(+) = a 3-oxoacyl-[ACP] + NADPH + H(+). It participates in lipid metabolism; mycolic acid biosynthesis. Functionally, part of the mycobacterial fatty acid elongation system FAS-II, which is involved in mycolic acid biosynthesis. Catalyzes the NADPH-dependent reduction of beta-ketoacyl derivatives, the second step of the FAS-II elongation cycle. In Mycobacterium avium, this protein is 3-oxoacyl-[acyl-carrier-protein] reductase MabA.